A 234-amino-acid polypeptide reads, in one-letter code: Probable chemoreceptor glutamine deamidase CheD (234 aa).

It belongs to the CheD family.

It carries out the reaction L-glutaminyl-[protein] + H2O = L-glutamyl-[protein] + NH4(+). Functionally, probably deamidates glutamine residues to glutamate on methyl-accepting chemotaxis receptors (MCPs), playing an important role in chemotaxis. The protein is Probable chemoreceptor glutamine deamidase CheD of Burkholderia pseudomallei (strain 1710b).